Consider the following 298-residue polypeptide: Phosphatidylserine decarboxylase proenzyme (298 aa).

Residues Asp-113, His-169, and Ser-256 each act as charge relay system; for autoendoproteolytic cleavage activity in the active site. The Schiff-base intermediate with substrate; via pyruvic acid; for decarboxylase activity role is filled by Ser-256. Ser-256 carries the post-translational modification Pyruvic acid (Ser); by autocatalysis.

It belongs to the phosphatidylserine decarboxylase family. PSD-B subfamily. Prokaryotic type II sub-subfamily. Heterodimer of a large membrane-associated beta subunit and a small pyruvoyl-containing alpha subunit. Requires pyruvate as cofactor. Is synthesized initially as an inactive proenzyme. Formation of the active enzyme involves a self-maturation process in which the active site pyruvoyl group is generated from an internal serine residue via an autocatalytic post-translational modification. Two non-identical subunits are generated from the proenzyme in this reaction, and the pyruvate is formed at the N-terminus of the alpha chain, which is derived from the carboxyl end of the proenzyme. The autoendoproteolytic cleavage occurs by a canonical serine protease mechanism, in which the side chain hydroxyl group of the serine supplies its oxygen atom to form the C-terminus of the beta chain, while the remainder of the serine residue undergoes an oxidative deamination to produce ammonia and the pyruvoyl prosthetic group on the alpha chain. During this reaction, the Ser that is part of the protease active site of the proenzyme becomes the pyruvoyl prosthetic group, which constitutes an essential element of the active site of the mature decarboxylase.

The protein localises to the cell membrane. The catalysed reaction is a 1,2-diacyl-sn-glycero-3-phospho-L-serine + H(+) = a 1,2-diacyl-sn-glycero-3-phosphoethanolamine + CO2. It participates in phospholipid metabolism; phosphatidylethanolamine biosynthesis; phosphatidylethanolamine from CDP-diacylglycerol: step 2/2. Its function is as follows. Catalyzes the formation of phosphatidylethanolamine (PtdEtn) from phosphatidylserine (PtdSer). The sequence is that of Phosphatidylserine decarboxylase proenzyme from Desulfitobacterium hafniense (strain DSM 10664 / DCB-2).